A 147-amino-acid polypeptide reads, in one-letter code: MEIAVLGLGCFWGPEIKFSKLEGVIKTEVGYCGGDSKTVTYKEVCTCNTNHAEVVKLDFDPKIISYEKILNFFFEIHDPTTLNSQGPDFGTQYRSEIFYLSDRQKEIAESVIKKVNLKLSGNVVTKSSLLKNYCPAEEYHQRYLEKR.

C10 is a catalytic residue.

The protein belongs to the MsrA Met sulfoxide reductase family.

It catalyses the reaction L-methionyl-[protein] + [thioredoxin]-disulfide + H2O = L-methionyl-(S)-S-oxide-[protein] + [thioredoxin]-dithiol. The enzyme catalyses [thioredoxin]-disulfide + L-methionine + H2O = L-methionine (S)-S-oxide + [thioredoxin]-dithiol. Has an important function as a repair enzyme for proteins that have been inactivated by oxidation. Catalyzes the reversible oxidation-reduction of methionine sulfoxide in proteins to methionine. This is Peptide methionine sulfoxide reductase MsrA from Pelagibacter ubique (strain HTCC1062).